The sequence spans 228 residues: Cytidylate kinase (228 aa).

Gly17 to Thr25 provides a ligand contact to ATP.

This sequence belongs to the cytidylate kinase family. Type 1 subfamily.

The protein resides in the cytoplasm. The catalysed reaction is CMP + ATP = CDP + ADP. The enzyme catalyses dCMP + ATP = dCDP + ADP. This chain is Cytidylate kinase, found in Burkholderia thailandensis (strain ATCC 700388 / DSM 13276 / CCUG 48851 / CIP 106301 / E264).